The following is a 517-amino-acid chain: Glucans biosynthesis protein G (517 aa).

A signal peptide spans 1-28; it reads MKHKLQMMKMRWLSAAVMLTLYTSSSWA.

The protein belongs to the OpgD/OpgG family.

Its subcellular location is the periplasm. It participates in glycan metabolism; osmoregulated periplasmic glucan (OPG) biosynthesis. Functionally, involved in the biosynthesis of osmoregulated periplasmic glucans (OPGs). The chain is Glucans biosynthesis protein G from Escherichia coli O1:K1 / APEC.